The chain runs to 152 residues: UPF0225 protein YchJ (152 aa).

This sequence belongs to the UPF0225 family.

This chain is UPF0225 protein YchJ, found in Escherichia coli O17:K52:H18 (strain UMN026 / ExPEC).